Here is a 464-residue protein sequence, read N- to C-terminus: Protein FAM90A26 (464 aa).

Disordered stretches follow at residues Met1–Leu42, Pro70–Pro293, Pro312–Gln390, and Ala410–Pro442. Basic and acidic residues-rich tracts occupy residues Gly74 to Lys83 and Asn97 to Arg114. Low complexity predominate over residues Ser178–Leu197.

This sequence belongs to the FAM90 family.

This chain is Protein FAM90A26, found in Homo sapiens (Human).